The following is a 427-amino-acid chain: Membrane-bound hydrogenase subunit alpha (427 aa).

C68, C71, C374, and C377 together coordinate Ni(2+).

Belongs to the complex I 49 kDa subunit family. The membrane-bound hydrogenase complex is composed of MbhK and MbhL, and may also contain MbhJ. Ni(2+) serves as cofactor.

The protein resides in the cell membrane. The enzyme catalyses H2 + 2 oxidized [2Fe-2S]-[ferredoxin] = 2 reduced [2Fe-2S]-[ferredoxin] + 2 H(+). Its activity is regulated as follows. Inhibited by 0.1 mM Cu(2+). Functionally, alpha subunit of a hydrogen-evolving hydrogenase that utilizes protons both as a substrate for hydrogen production and proton translocation. Acts by coupling the redox reaction via ferredoxin and iron-sulfur (Fe-S) clusters to proton translocation across the membrane thereby conserving the redox energy in a proton gradient. This is Membrane-bound hydrogenase subunit alpha from Pyrococcus furiosus (strain ATCC 43587 / DSM 3638 / JCM 8422 / Vc1).